Consider the following 286-residue polypeptide: Putative WUSCHEL-related homeobox 2 (286 aa).

Positions 1-25 (MAPAVQQQQSGGGGGSTGAAAVGST) are disordered. The segment at residues 23-87 (GSTTRWCPTP…NHKARDRQKL (65 aa)) is a DNA-binding region (homeobox; WUS-type).

This sequence belongs to the WUS homeobox family.

Its subcellular location is the nucleus. Functionally, transcription factor which may be involved in developmental processes. This Oryza sativa subsp. japonica (Rice) protein is Putative WUSCHEL-related homeobox 2 (WOX2).